Here is a 64-residue protein sequence, read N- to C-terminus: Gallinacin-2 (64 aa).

A signal peptide spans 1–22 (MRILYLLFSLLFLALQVSPGLS). The propeptide occupies 23–28 (SPRRDM). 3 cysteine pairs are disulfide-bonded: C31–C57, C36–C51, and C41–C58.

Expressed in circulating heterophil granulocytes and bone marrow (at protein level). Strong expression in the bone marrow, lung and testis. Moderate expression in the bursa and intestine. Low expression in the cloaca, gall bladder, brain, pancreas, trachea, air sacs and spleen. Expressed in the vagina, ovarian stroma and the theca layer of the ovarian follicle, but not in the granulosa layer of the ovarian follicle.

The protein resides in the secreted. It is found in the cytoplasmic granule. Potent antibacterial activity against the Gram-negative bacterium E.coli ML-35, and against the Gram-positive bacterium L.monocytogenes EGD. Lacks antifungal activity against C.albicans. The chain is Gallinacin-2 (GAL2) from Gallus gallus (Chicken).